The chain runs to 739 residues: UPF0313 protein YgiQ (739 aa).

The Radical SAM core domain maps to 372–650 (AYEMIRFSVN…KALLRYHDPA (279 aa)). Positions 386, 390, and 393 each coordinate [4Fe-4S] cluster. The disordered stretch occupies residues 685 to 739 (REARRQNRNTRPALTKHTPMATQRQTPATAKKASSTQSRPVNAGAKKRPKAAVGR). The span at 704–724 (MATQRQTPATAKKASSTQSRP) shows a compositional bias: polar residues. The segment covering 729–739 (AKKRPKAAVGR) has biased composition (basic residues).

Belongs to the UPF0313 family. It depends on [4Fe-4S] cluster as a cofactor.

The chain is UPF0313 protein YgiQ (ygiQ) from Escherichia coli (strain K12).